Reading from the N-terminus, the 130-residue chain is Glycine cleavage system H protein (130 aa).

Positions 24–106 constitute a Lipoyl-binding domain; the sequence is SVTVGITEHA…YGDGWIMRIQ (83 aa). N6-lipoyllysine is present on Lys-65.

This sequence belongs to the GcvH family. The glycine cleavage system is composed of four proteins: P, T, L and H. (R)-lipoate serves as cofactor.

Its function is as follows. The glycine cleavage system catalyzes the degradation of glycine. The H protein shuttles the methylamine group of glycine from the P protein to the T protein. In Halorhodospira halophila (strain DSM 244 / SL1) (Ectothiorhodospira halophila (strain DSM 244 / SL1)), this protein is Glycine cleavage system H protein.